The sequence spans 453 residues: tRNA modification GTPase MnmE (453 aa).

Residues Arg-22, Glu-79, and Lys-119 each coordinate (6S)-5-formyl-5,6,7,8-tetrahydrofolate. The region spanning 215-376 (GMKVVIAGRP…LRNHLKECMG (162 aa)) is the TrmE-type G domain. Residue Asn-225 coordinates K(+). GTP-binding positions include 225-230 (NAGKSS), 244-250 (TDIAGTT), 269-272 (DTAG), and 334-337 (NKAD). Residue Ser-229 participates in Mg(2+) binding. Thr-244, Ile-246, and Thr-249 together coordinate K(+). Residue Thr-250 participates in Mg(2+) binding. Lys-453 is a (6S)-5-formyl-5,6,7,8-tetrahydrofolate binding site.

Belongs to the TRAFAC class TrmE-Era-EngA-EngB-Septin-like GTPase superfamily. TrmE GTPase family. Homodimer. Heterotetramer of two MnmE and two MnmG subunits. K(+) serves as cofactor.

The protein resides in the cytoplasm. Exhibits a very high intrinsic GTPase hydrolysis rate. Involved in the addition of a carboxymethylaminomethyl (cmnm) group at the wobble position (U34) of certain tRNAs, forming tRNA-cmnm(5)s(2)U34. In Vibrio parahaemolyticus serotype O3:K6 (strain RIMD 2210633), this protein is tRNA modification GTPase MnmE.